The following is a 204-amino-acid chain: Peptide deformylase (204 aa).

Positions 131 and 174 each coordinate Fe cation. Glu175 is an active-site residue. His178 lines the Fe cation pocket.

Belongs to the polypeptide deformylase family. It depends on Fe(2+) as a cofactor.

The catalysed reaction is N-terminal N-formyl-L-methionyl-[peptide] + H2O = N-terminal L-methionyl-[peptide] + formate. Its function is as follows. Removes the formyl group from the N-terminal Met of newly synthesized proteins. Requires at least a dipeptide for an efficient rate of reaction. N-terminal L-methionine is a prerequisite for activity but the enzyme has broad specificity at other positions. The sequence is that of Peptide deformylase from Streptococcus pyogenes serotype M18 (strain MGAS8232).